The chain runs to 426 residues: 3-phosphoshikimate 1-carboxyvinyltransferase (426 aa).

3-phosphoshikimate is bound by residues Lys-20, Ser-21, and Arg-25. Lys-20 serves as a coordination point for phosphoenolpyruvate. Residues Gly-92 and Arg-120 each contribute to the phosphoenolpyruvate site. 3-phosphoshikimate-binding residues include Ser-166, Gln-168, Asp-312, and Lys-339. Gln-168 is a binding site for phosphoenolpyruvate. Catalysis depends on Asp-312, which acts as the Proton acceptor. Residues Arg-343 and Arg-385 each contribute to the phosphoenolpyruvate site.

This sequence belongs to the EPSP synthase family. Monomer.

Its subcellular location is the cytoplasm. The catalysed reaction is 3-phosphoshikimate + phosphoenolpyruvate = 5-O-(1-carboxyvinyl)-3-phosphoshikimate + phosphate. Its pathway is metabolic intermediate biosynthesis; chorismate biosynthesis; chorismate from D-erythrose 4-phosphate and phosphoenolpyruvate: step 6/7. Catalyzes the transfer of the enolpyruvyl moiety of phosphoenolpyruvate (PEP) to the 5-hydroxyl of shikimate-3-phosphate (S3P) to produce enolpyruvyl shikimate-3-phosphate and inorganic phosphate. The protein is 3-phosphoshikimate 1-carboxyvinyltransferase of Enterococcus faecalis (strain ATCC 700802 / V583).